The primary structure comprises 578 residues: Thrombomodulin (578 aa).

An N-terminal signal peptide occupies residues 1-16; that stretch reads MLRVLLLGVLAPAGLG. At 17 to 518 the chain is on the extracellular side; the sequence is LPTPAQPQPR…SPSPVGPVHS (502 aa). Positions 31 to 167 constitute a C-type lectin domain; it reads MEHDCFQLFR…CAAEADGFLC (137 aa). N-linked (GlcNAc...) asparagine glycosylation occurs at N114. 19 disulfide bridges follow: C137–C158, C246–C257, C253–C266, C268–C281, C289–C297, C293–C309, C311–C324, C330–C341, C337–C350, C352–C363, C370–C379, C375–C389, C391–C405, C409–C414, C418–C426, C428–C440, C446–C455, C451–C464, and C466–C480. EGF-like domains lie at 242–282 and 285–325; these read GAWD…RSCA and AEHS…HRCE. N300 carries an N-linked (GlcNAc...) asparagine glycan. An EGF-like 3; calcium-binding domain is found at 326–364; the sequence is DVDDCIQVPSLCPQLCVNTRGAFECHCYPGYELVDNECV. N343 is subject to (3R)-3-hydroxyasparagine. EGF-like domains follow at residues 366-406 and 405-441; these read PVDP…HRCQ and CQMF…FMCT. Residue N410 is glycosylated (N-linked (GlcNAc...) asparagine). One can recognise an EGF-like 6; calcium-binding domain in the interval 442–481; it reads DIDECENGECPEACRNLPGTYECICGPDSPLAGQVATDCG. The segment at 483-512 is disordered; it reads IISDPDGDSDSGSGEPPVTPTPGVTPSPSP. O-linked (Xyl...) (chondroitin sulfate) serine glycosylation is found at S493 and S495. Residues 499-512 are compositionally biased toward pro residues; it reads PVTPTPGVTPSPSP. The chain crosses the membrane as a helical span at residues 519–539; that stretch reads GVLIGISIASLSLVVALLALL. Topologically, residues 540–578 are cytoplasmic; that stretch reads CHLRKKQGAPRAELEYKCGAPAKEVVLQHVRTEQMPQKL.

As to quaternary structure, interacts with ITGAL, ITGAM and ITGB2. Interacts with thrombin/F2; this interaction switches the specificity of thrombin from a procoagulant to an anticoagulant and antifibrinolytic protease. Interacts with ANGP1 and ANGP2; these interactions significantly inhibit the generation of activated PC and TAFIa/CPB2 by the thrombin/thrombomodulin complex. Interacts with PF4; this interaction enhances generation of activated protein C. Interacts with HMGB1; this interaction inhibits HMGB1 inflammatory activity. In terms of processing, N-glycosylated. Post-translationally, the iron and 2-oxoglutarate dependent 3-hydroxylation of aspartate and asparagine is (R) stereospecific within EGF domains. In terms of tissue distribution, expressed in lung, liver, spleen, kidney, pancreas and lymph node. Low expression in heart, cerebrum, urinary bladder and uterus.

The protein localises to the membrane. Functionally, endothelial cell receptor that plays a critical role in regulating several physiological processes including hemostasis, coagulation, fibrinolysis, inflammation, and angiogenesis. Acts as a cofactor for thrombin activation of protein C/PROC on the surface of vascular endothelial cells leading to initiation of the activated protein C anticoagulant pathway. Also accelerates the activation of the plasma carboxypeptidase B2/CPB2, which catalyzes removal of C-terminal basic amino acids from its substrates including kinins or anaphylatoxins leading to fibrinolysis inhibition. Plays critical protective roles in changing the cleavage specificity of protease-activated receptor 1/PAR1, inhibiting endothelial cell permeability and inflammation. Suppresses inflammation distinctly from its anticoagulant cofactor activity by sequestering HMGB1 thereby preventing it from engaging cellular receptors such as RAGE and contributing to the inflammatory response. The chain is Thrombomodulin (THBD) from Canis lupus familiaris (Dog).